A 968-amino-acid chain; its full sequence is Phosphatidylserine decarboxylase 2 proenzyme (968 aa).

The signal sequence occupies residues 1–25; the sequence is MAKVMRLIIFVCVALVAISVPAASS. Residues Asp-500, His-570, and Ser-683 each act as charge relay system; for autoendoproteolytic cleavage activity in the active site. Catalysis depends on Ser-683, which acts as the Schiff-base intermediate with substrate; via pyruvic acid; for decarboxylase activity. Ser-683 bears the Pyruvic acid (Ser); by autocatalysis mark.

It belongs to the phosphatidylserine decarboxylase family. In terms of assembly, heterodimer of a large membrane-associated beta subunit and a small pyruvoyl-containing alpha subunit. Pyruvate serves as cofactor. In terms of processing, is synthesized initially as an inactive proenzyme. Formation of the active enzyme involves a self-maturation process in which the active site pyruvoyl group is generated from an internal serine residue via an autocatalytic post-translational modification. Two non-identical subunits are generated from the proenzyme in this reaction, and the pyruvate is formed at the N-terminus of the alpha chain, which is derived from the carboxyl end of the proenzyme. The autoendoproteolytic cleavage occurs by a canonical serine protease mechanism, in which the side chain hydroxyl group of the serine supplies its oxygen atom to form the C-terminus of the beta chain, while the remainder of the serine residue undergoes an oxidative deamination to produce ammonia and the pyruvoyl prosthetic group on the alpha chain. During this reaction, the Ser that is part of the protease active site of the proenzyme becomes the pyruvoyl prosthetic group, which constitutes an essential element of the active site of the mature decarboxylase.

The protein localises to the parasitophorous vacuole. Its subcellular location is the cytoplasmic vesicle. It localises to the secretory vesicle. It carries out the reaction a 1,2-diacyl-sn-glycero-3-phospho-L-serine + H(+) = a 1,2-diacyl-sn-glycero-3-phosphoethanolamine + CO2. Its pathway is phospholipid metabolism; phosphatidylethanolamine biosynthesis; phosphatidylethanolamine from CDP-diacylglycerol: step 2/2. Its function is as follows. Catalyzes the formation of phosphatidylethanolamine (PtdEtn) from phosphatidylserine (PtdSer). Plays a central role in phospholipid metabolism and in the interorganelle trafficking of phosphatidylserine. Can act on liposomal and host cell PtdSer. The polypeptide is Phosphatidylserine decarboxylase 2 proenzyme (Toxoplasma gondii (strain ATCC 50853 / GT1)).